Consider the following 115-residue polypeptide: MGTRLLFWVAFCLLGADHTGAGVSQSPSNKVTEKGKDVELRCDPISGHTALYWYRQSLGQGLEFLIYFQGNSAPDKSGLPSDRFSAERTGGSVSTLTIQRTQQEDSAVYLCASSL.

An N-terminal signal peptide occupies residues 1–21 (MGTRLLFWVAFCLLGADHTGA). The region spanning 22–115 (GVSQSPSNKV…SAVYLCASSL (94 aa)) is the Ig-like domain. An intrachain disulfide couples C42 to C111.

In terms of assembly, alpha-beta TR is a heterodimer composed of an alpha and beta chain; disulfide-linked. The alpha-beta TR is associated with the transmembrane signaling CD3 coreceptor proteins to form the TR-CD3 (TcR or TCR). The assembly of alpha-beta TR heterodimers with CD3 occurs in the endoplasmic reticulum where a single alpha-beta TR heterodimer associates with one CD3D-CD3E heterodimer, one CD3G-CD3E heterodimer and one CD247 homodimer forming a stable octameric structure. CD3D-CD3E and CD3G-CD3E heterodimers preferentially associate with TR alpha and TR beta chains, respectively. The association of the CD247 homodimer is the last step of TcR assembly in the endoplasmic reticulum and is required for transport to the cell surface.

The protein localises to the cell membrane. In terms of biological role, v region of the variable domain of T cell receptor (TR) beta chain that participates in the antigen recognition. Alpha-beta T cell receptors are antigen specific receptors which are essential to the immune response and are present on the cell surface of T lymphocytes. Recognize peptide-major histocompatibility (MH) (pMH) complexes that are displayed by antigen presenting cells (APC), a prerequisite for efficient T cell adaptive immunity against pathogens. Binding of alpha-beta TR to pMH complex initiates TR-CD3 clustering on the cell surface and intracellular activation of LCK that phosphorylates the ITAM motifs of CD3G, CD3D, CD3E and CD247 enabling the recruitment of ZAP70. In turn ZAP70 phosphorylates LAT, which recruits numerous signaling molecules to form the LAT signalosome. The LAT signalosome propagates signal branching to three major signaling pathways, the calcium, the mitogen-activated protein kinase (MAPK) kinase and the nuclear factor NF-kappa-B (NF-kB) pathways, leading to the mobilization of transcription factors that are critical for gene expression and essential for T cell growth and differentiation. The T cell repertoire is generated in the thymus, by V-(D)-J rearrangement. This repertoire is then shaped by intrathymic selection events to generate a peripheral T cell pool of self-MH restricted, non-autoaggressive T cells. Post-thymic interaction of alpha-beta TR with the pMH complexes shapes TR structural and functional avidity. The polypeptide is T cell receptor beta variable 7-2 (Homo sapiens (Human)).